Here is a 183-residue protein sequence, read N- to C-terminus: Translation initiation factor IF-3 (183 aa).

The protein belongs to the IF-3 family. As to quaternary structure, monomer.

The protein resides in the cytoplasm. IF-3 binds to the 30S ribosomal subunit and shifts the equilibrium between 70S ribosomes and their 50S and 30S subunits in favor of the free subunits, thus enhancing the availability of 30S subunits on which protein synthesis initiation begins. This Yersinia pseudotuberculosis serotype O:1b (strain IP 31758) protein is Translation initiation factor IF-3.